The chain runs to 343 residues: MTITPQEALQRTIEHREIFHDEMLHLMRLIMRGDLSPVMAAAIITGLRVKKETIGEIAAAATVMREFANHVEVQDNSNFVDIVGTGGDGSHTFNISTASMFVTAAAGAKVAKHGNRGVSSKSGSADVLEALGVNIDLQSEQVAASIAETGMGFMFAPNHHPAMKNIAAVRRELGVRTIFNILGPLTNPAGAPNQLMGVFHPDLVGIQVRVMQRLGAQHVLVVYGKDGMDEVSLGAATLVGELRDGKVHEYEIHPEDFGLQMVSNRTLKVENADESRTMLLGALDNQPGVAREIVTLNAGTALYAANIAESIADGIQLAREAIASGKARAKVDELVRFTQQFKR.

5-phospho-alpha-D-ribose 1-diphosphate contacts are provided by residues Gly84, 87–88 (GD), Thr92, 94–97 (NIST), 112–120 (KHGNRGVSS), and Ser124. An anthranilate-binding site is contributed by Gly84. Ser96 contacts Mg(2+). Asn115 is a binding site for anthranilate. Arg170 contacts anthranilate. The Mg(2+) site is built by Asp229 and Glu230.

The protein belongs to the anthranilate phosphoribosyltransferase family. As to quaternary structure, homodimer. Requires Mg(2+) as cofactor.

The catalysed reaction is N-(5-phospho-beta-D-ribosyl)anthranilate + diphosphate = 5-phospho-alpha-D-ribose 1-diphosphate + anthranilate. It functions in the pathway amino-acid biosynthesis; L-tryptophan biosynthesis; L-tryptophan from chorismate: step 2/5. In terms of biological role, catalyzes the transfer of the phosphoribosyl group of 5-phosphorylribose-1-pyrophosphate (PRPP) to anthranilate to yield N-(5'-phosphoribosyl)-anthranilate (PRA). The polypeptide is Anthranilate phosphoribosyltransferase (Burkholderia orbicola (strain AU 1054)).